The primary structure comprises 186 residues: MSPLPLRDPSHQANAGPRLVEPSCGPGVSLSNRTLCHPSWPMYDNWGRSPTTSERPEEEQVVSKDTGVPVRNYEDVFLLDPLLPCGQRVPLILTKPPQQAMDSRKLLLPPPIMSPSVHPSSSQACSSTWLSEAEMIALAGLLQMSQGEQTPNCVASSLPSTSCPDPVSVSEDPGPSGDQSCSGTDT.

Disordered stretches follow at residues 1 to 25 and 148 to 186; these read MSPL…PSCG and EQTP…GTDT. Polar residues-rich tracts occupy residues 148-163 and 177-186; these read EQTP…STSC and GDQSCSGTDT.

In terms of assembly, may be a component of the mSIN3A corepressor complex. Interacts with SIN3A and HDAC2. Widely expressed.

It localises to the nucleus. The protein localises to the cytoplasm. Its function is as follows. Involved in the transcriptional repression mediated by the mSIN3A but not the N-CoR corepressor complex. This is Histone deacetylase complex subunit SAP25 (Sap25) from Mus musculus (Mouse).